Reading from the N-terminus, the 382-residue chain is Gap junction alpha-1 protein (382 aa).

Topologically, residues G2–K23 are cytoplasmic. S5 is subject to Phosphoserine. A helical transmembrane segment spans residues V24 to A44. Topologically, residues W45 to R76 are extracellular. Disulfide bonds link C54–C192 and C187–C198. A helical membrane pass occupies residues F77–F97. Topologically, residues Y98–Y155 are cytoplasmic. K144 is covalently cross-linked (Glycyl lysine isopeptide (Lys-Gly) (interchain with G-Cter in SUMO)). A helical membrane pass occupies residues I156–I176. Residues Y177 to T207 are Extracellular-facing. A helical transmembrane segment spans residues I208–L228. At F229–I382 the chain is on the cytoplasmic side. K237 participates in a covalent cross-link: Glycyl lysine isopeptide (Lys-Gly) (interchain with G-Cter in SUMO). Residues S244–I382 are interaction with NOV. Y247 carries the post-translational modification Phosphotyrosine. 3 positions are modified to phosphoserine: S255, S257, and S262. Residues K264 to I382 form an interaction with UBQLN4 region. Position 271 is an S-nitrosocysteine (C271). A Phosphothreonine modification is found at T275. A phosphoserine mark is found at S306 and S314. The segment covering Q317 to A332 has biased composition (polar residues). The tract at residues Q317 to I382 is disordered. At S325 the chain carries Phosphoserine; by CK1. T326 is subject to Phosphothreonine. Phosphoserine; by CK1 is present on residues S328 and S330. S344 and S365 each carry phosphoserine. Positions R362–R374 are enriched in low complexity. At S368 the chain carries Phosphoserine; by PKC/PRKCG and PKC/PRKCD. 2 positions are modified to phosphoserine: S369 and S373.

Belongs to the connexin family. Alpha-type (group II) subfamily. In terms of assembly, a connexon is composed of a hexamer of connexins. Interacts with SGSM3. Interacts with RIC1/CIP150. Interacts with CNST and CSNK1D. Interacts (via C-terminus) with TJP1. Interacts (via C-terminus) with SRC (via SH3 domain). Interacts (not ubiquitinated) with UBQLN4 (via UBA domain). Interacts with NOV. Interacts with TMEM65. Interacts with ANK3/ANKG and PKP2. Phosphorylation at Ser-325, Ser-328 and Ser-330 by CK1 modulates gap junction assembly. Phosphorylated at Ser-368 by PRKCG; phosphorylation induces disassembly of gap junction plaques and inhibition of gap junction activity. Phosphorylation at Ser-368 by PRKCD triggers its internalization into small vesicles leading to proteasome-mediated degradation. Post-translationally, sumoylated with SUMO1, SUMO2 and SUMO3, which may regulate the level of functional Cx43 gap junctions at the plasma membrane. May be desumoylated by SENP1 or SENP2. In terms of processing, S-nitrosylation at Cys-271 is enriched at the muscle endothelial gap junction in arteries, it augments channel permeability and may regulate of smooth muscle cell to endothelial cell communication. Acetylated in the developing cortex; leading to delocalization from the cell membrane.

It localises to the cell membrane. It is found in the cell junction. Its subcellular location is the gap junction. The protein localises to the endoplasmic reticulum. Its function is as follows. Gap junction protein that acts as a regulator of bladder capacity. A gap junction consists of a cluster of closely packed pairs of transmembrane channels, the connexons, through which materials of low MW diffuse from one cell to a neighboring cell. May play a critical role in the physiology of hearing by participating in the recycling of potassium to the cochlear endolymph. Negative regulator of bladder functional capacity: acts by enhancing intercellular electrical and chemical transmission, thus sensitizing bladder muscles to cholinergic neural stimuli and causing them to contract. May play a role in cell growth inhibition through the regulation of NOV expression and localization. Plays an essential role in gap junction communication in the ventricles. The protein is Gap junction alpha-1 protein (GJA1) of Oryctolagus cuniculus (Rabbit).